The primary structure comprises 164 residues: Ribosome maturation factor RimM (164 aa).

One can recognise a PRC barrel domain in the interval 90–161 (KGSYFIADLI…TVTIKPLEIW (72 aa)).

It belongs to the RimM family. In terms of assembly, binds ribosomal protein uS19.

It is found in the cytoplasm. In terms of biological role, an accessory protein needed during the final step in the assembly of 30S ribosomal subunit, possibly for assembly of the head region. Essential for efficient processing of 16S rRNA. May be needed both before and after RbfA during the maturation of 16S rRNA. It has affinity for free ribosomal 30S subunits but not for 70S ribosomes. This is Ribosome maturation factor RimM from Clostridium botulinum (strain Langeland / NCTC 10281 / Type F).